Reading from the N-terminus, the 713-residue chain is MATYLIEVGTEELPADFVAAAIAQLKDRVSHSLTEYFLTPDGIEVYGTPRRLAVLIQGLPDQQADREEEIKGPPAAAAFKEGQPTKAAEGFARKQGVELSALEVRPTEKGDFVFVQKKTLGRPTPEILQELVLGWFTALEGRRFMRWADGDLRFPRPIRWLVSLWNDAVLPLELVNGSGKLEAGRISRGHRILHQGDVTLNNAADYVVTLQQAFVEVNPQVREEKIVAGVKAAAAEIGGEAEMPADLLAEVVNLVEYPTAVVGDIEAEFLELPTEVITTVMVTHQRYFAVRDRQDKTKLLPKFITISNGDPKKSEIIAAGNGRVIRARLADGQFFYRADCDEHLETYLPQLEAVTFQEELGTMRDKVDRIMEISQQIAEQLGLSEADKEIIASTAMLCKADLVTQMVYEFPELQGIMGQKYALVSGEAPAVAEGIFEHYLPRNADDILPQTLAGQVVGMGDRLDTLVSIFGLGMIPSGSSDPFALRRAANAIITVAWDAGLEIDLGELLAQGAKDFVTAHPDKTSPLEALQSFFIQRIQTLLQDEKGIDYDLVNAVLGDDAEYTERALTDLLDVGDRAAFLQSIRDDGQLAKIYATVNRSAKLAAKGNLSTDSLDPTGVINPEKFAQNSERDLYAGLVELVPTTEVARTERDYQKLIDGLAALAPTVERFFDGEDSVLVMAEDPAVRENRLNLLGLLRNHARVLADFGAIVKQ.

The protein belongs to the class-II aminoacyl-tRNA synthetase family. In terms of assembly, tetramer of two alpha and two beta subunits.

The protein localises to the cytoplasm. The catalysed reaction is tRNA(Gly) + glycine + ATP = glycyl-tRNA(Gly) + AMP + diphosphate. This is Glycine--tRNA ligase beta subunit from Picosynechococcus sp. (strain ATCC 27264 / PCC 7002 / PR-6) (Agmenellum quadruplicatum).